Here is a 269-residue protein sequence, read N- to C-terminus: Phosphatidylglycerol--prolipoprotein diacylglyceryl transferase (269 aa).

7 helical membrane-spanning segments follow: residues 17-37 (IGPI…MLGW), 59-79 (FLVW…VLFY), 95-115 (WQGG…IIAF), 123-143 (LFQV…FGRI), 181-201 (AGLE…LTGI), 206-226 (GALS…SEFF), and 242-262 (MGQL…AWAL). Arg-142 is a binding site for a 1,2-diacyl-sn-glycero-3-phospho-(1'-sn-glycerol).

It belongs to the Lgt family.

The protein resides in the cell inner membrane. It catalyses the reaction L-cysteinyl-[prolipoprotein] + a 1,2-diacyl-sn-glycero-3-phospho-(1'-sn-glycerol) = an S-1,2-diacyl-sn-glyceryl-L-cysteinyl-[prolipoprotein] + sn-glycerol 1-phosphate + H(+). It participates in protein modification; lipoprotein biosynthesis (diacylglyceryl transfer). Functionally, catalyzes the transfer of the diacylglyceryl group from phosphatidylglycerol to the sulfhydryl group of the N-terminal cysteine of a prolipoprotein, the first step in the formation of mature lipoproteins. This Paramagnetospirillum magneticum (strain ATCC 700264 / AMB-1) (Magnetospirillum magneticum) protein is Phosphatidylglycerol--prolipoprotein diacylglyceryl transferase.